A 428-amino-acid chain; its full sequence is Cyclic AMP-responsive element-binding protein 3-like protein 3-B (428 aa).

Over 1 to 286 (MDHYSDQGGD…VMNGSNKPVQ (286 aa)) the chain is Cytoplasmic. The segment covering 67-83 (VSGSPVWSPSPSDSGIS) has biased composition (low complexity). A disordered region spans residues 67–104 (VSGSPVWSPSPSDSGISEDPHSDHIDSPPPNASPPMEP). Residues 93–103 (SPPPNASPPME) show a composition bias toward pro residues. One can recognise a bZIP domain in the interval 210–273 (ILKKIRRKIR…ISLMEQLRRL (64 aa)). Residues 212-241 (KKIRRKIRNKQSAQESRKKKKEYIDGLESR) are basic motif. The tract at residues 252-273 (LQRKVFQLEKCNISLMEQLRRL) is leucine-zipper. Residues 287–303 (AGTCVLVLLLSFTLILL) traverse the membrane as a helical; Signal-anchor for type II membrane protein segment. Over 304–428 (PNLKPFTDTK…SRRSPHADDM (125 aa)) the chain is Lumenal. Residues 381–428 (TEYDPESHNHSFDQHDEHHHGDPITGHVATVTLNPRRGSRRSPHADDM) form a disordered region. Residues 385–402 (PESHNHSFDQHDEHHHGD) are compositionally biased toward basic and acidic residues. N-linked (GlcNAc...) asparagine glycosylation occurs at Asn-389.

The protein belongs to the bZIP family. ATF subfamily. Binds DNA as a dimer. In terms of processing, controlled by regulated intramembrane proteolysis (RIP). A fragment containing the cytoplasmic transcription factor domain is released by proteolysis. The cleavage seems to be performed sequentially by site-1 and site-2 proteases.

It localises to the endoplasmic reticulum membrane. Its subcellular location is the nucleus. Functionally, transcriptional activator. Binds the cAMP response element (CRE). Activates transcription through box-B element and CRE. Seems to function synergistically with atf6. Regulates FGF21 transcription. The protein is Cyclic AMP-responsive element-binding protein 3-like protein 3-B (creb3l3b) of Danio rerio (Zebrafish).